A 586-amino-acid polypeptide reads, in one-letter code: Assimilatory ferredoxin-dependent nitrite reductase (586 aa).

[4Fe-4S] cluster contacts are provided by cysteine 411, cysteine 417, cysteine 455, and cysteine 459. Cysteine 459 is a siroheme binding site. A disordered region spans residues 566–586; the sequence is SWYPFADEDEPPKTEQPMTSD.

Belongs to the nitrite and sulfite reductase 4Fe-4S domain family. As to quaternary structure, monomer. Siroheme is required as a cofactor. Requires [4Fe-4S] cluster as cofactor.

The enzyme catalyses 6 oxidized [2Fe-2S]-[ferredoxin] + NH4(+) + 2 H2O = nitrite + 6 reduced [2Fe-2S]-[ferredoxin] + 8 H(+). It functions in the pathway nitrogen metabolism; nitrate reduction (assimilation). With respect to regulation, inhibited by cyanide and azide. Its function is as follows. Catalyzes the reduction of nitrite to ammonium in the nitrate assimilation pathway, using ferredoxin as the electron donor. Can use reduced methyl viologen but neither NADPH nor NADH as electron donors. The polypeptide is Assimilatory ferredoxin-dependent nitrite reductase (Haloferax mediterranei (strain ATCC 33500 / DSM 1411 / JCM 8866 / NBRC 14739 / NCIMB 2177 / R-4) (Halobacterium mediterranei)).